The chain runs to 442 residues: tRNA(Ile)-lysidine synthase (442 aa).

An ATP-binding site is contributed by Ser30 to Ser35.

Belongs to the tRNA(Ile)-lysidine synthase family.

The protein localises to the cytoplasm. The catalysed reaction is cytidine(34) in tRNA(Ile2) + L-lysine + ATP = lysidine(34) in tRNA(Ile2) + AMP + diphosphate + H(+). In terms of biological role, ligates lysine onto the cytidine present at position 34 of the AUA codon-specific tRNA(Ile) that contains the anticodon CAU, in an ATP-dependent manner. Cytidine is converted to lysidine, thus changing the amino acid specificity of the tRNA from methionine to isoleucine. This is tRNA(Ile)-lysidine synthase from Pseudomonas fluorescens (strain Pf0-1).